The chain runs to 497 residues: Lysine--tRNA ligase (497 aa).

Mg(2+) is bound by residues Glu-409 and Glu-416.

This sequence belongs to the class-II aminoacyl-tRNA synthetase family. In terms of assembly, homodimer. It depends on Mg(2+) as a cofactor.

It localises to the cytoplasm. The catalysed reaction is tRNA(Lys) + L-lysine + ATP = L-lysyl-tRNA(Lys) + AMP + diphosphate. In Streptococcus pyogenes serotype M3 (strain ATCC BAA-595 / MGAS315), this protein is Lysine--tRNA ligase.